The chain runs to 127 residues: Large-conductance mechanosensitive channel (127 aa).

3 consecutive transmembrane segments (helical) span residues 9 to 29 (EFAM…GVAF), 32 to 52 (IVTA…LGGV), and 75 to 95 (VIDF…INLL).

The protein belongs to the MscL family. Homopentamer.

Its subcellular location is the cell inner membrane. Functionally, channel that opens in response to stretch forces in the membrane lipid bilayer. May participate in the regulation of osmotic pressure changes within the cell. This is Large-conductance mechanosensitive channel from Legionella pneumophila (strain Lens).